The sequence spans 319 residues: Ferrochelatase (319 aa).

Residues His194 and Glu275 each contribute to the Fe cation site.

This sequence belongs to the ferrochelatase family.

The protein localises to the cytoplasm. It catalyses the reaction heme b + 2 H(+) = protoporphyrin IX + Fe(2+). It participates in porphyrin-containing compound metabolism; protoheme biosynthesis; protoheme from protoporphyrin-IX: step 1/1. Catalyzes the ferrous insertion into protoporphyrin IX. This is Ferrochelatase from Vibrio vulnificus (strain CMCP6).